The chain runs to 509 residues: Coiled-coil domain-containing protein 181 (509 aa).

Basic and acidic residues predominate over residues 58–82; that stretch reads VIEHTKQHSDPDKSLQDEVSPRKND. 3 disordered regions span residues 58–120, 241–332, and 345–367; these read VIEH…EEED, PINN…VTST, and QLEQKREKLKREEERRKIEEEKE. 2 stretches are compositionally biased toward polar residues: residues 243–266 and 300–332; these read NNANTTENDPQQLLPRSSNSSVSG and TCPSSAVISDQSKGNGNSNHRAQSAHISPVTST. A coiled-coil region spans residues 335-375; it reads LSPRQKELQKQLEQKREKLKREEERRKIEEEKEKKRENDIV.

This sequence belongs to the CCDC181 family. In terms of assembly, homodimer. Interacts with HOOK1. Interacts with HOOK2. Interacts with HOOK3.

The protein localises to the cytoplasm. It is found in the cytoskeleton. Its subcellular location is the cell projection. The protein resides in the cilium. It localises to the flagellum. Functionally, microtubule-binding protein that localizes to the microtubular manchette of elongating spermatids. The protein is Coiled-coil domain-containing protein 181 of Pongo abelii (Sumatran orangutan).